Reading from the N-terminus, the 673-residue chain is Kinesin-like protein KIFC1 (673 aa).

Residues Ser6, Ser26, Ser31, and Ser33 each carry the phosphoserine modification. Disordered regions lie at residues 23–94 and 109–136; these read KAPS…TGPR and VPAV…KRPA. The span at 60–86 shows a compositional bias: polar residues; the sequence is TKITTSHPRVPSLTTVPQTQGQTTAQK. The stretch at 142 to 306 forms a coiled coil; it reads QLCDLNAELK…RRRLHNQLQE (165 aa). The Kinesin motor domain maps to 310 to 663; sequence NIRVFCRVRP…LRFASKVNQC (354 aa). The segment at 325–372 is disordered; the sequence is PTPPPGLLLFPSGPGGPSDPPTRLSLSRSDERRGTLSGAPAPPTRHDF. Phosphothreonine is present on Thr359. Residue 410-417 participates in ATP binding; sequence GQTGSGKT.

The protein belongs to the TRAFAC class myosin-kinesin ATPase superfamily. Kinesin family. NCD subfamily. As to quaternary structure, binds NUBP1 and NUBP2. Interacts with PPP1R42.

It localises to the nucleus. It is found in the cytoplasm. The protein localises to the cytoskeleton. The protein resides in the microtubule organizing center. Its subcellular location is the centrosome. It localises to the spindle. It is found in the early endosome. Its function is as follows. Minus end-directed microtubule-dependent motor required for bipolar spindle formation. May contribute to movement of early endocytic vesicles. Regulates cilium formation and structure. This chain is Kinesin-like protein KIFC1 (KIFC1), found in Homo sapiens (Human).